Here is a 545-residue protein sequence, read N- to C-terminus: MAAKDVKFGSDARIKMLEGVNVLANAVKVTLGPKGRNVVLDKSFGAPTITKDGVSVAKEIELEDKFQNMGAQMVKEVASQANDAAGDGTTTATVLAQSIITEGLKAVAAGMNPMDLKRGIDKAVLAAVEELKTLSVPCADTKAIAQVGTISANSDENVGKLIAEAMDKVGRDGVITVEDGQGLQDELAVVEGMQFDRGYLSPYFINKQDTASVELDDPFILLVDKKVSNIREMLSVLEGVAKAGKPLVIIAEDVEGEALATLVVNTMRGIVKVAAVKAPGFGDRRKAMLQDIAILTAGTVISEEIGMELEKATLEELGRAKRIVITKENTTIIDGVGEAATIEARIAQIRQQIEESSSDYDKEKLQERVAKLAGGVAVIKVGATTEVEMKEKKARVEDALHATRAAVEEGVVAGGGVALVRAAAKLADLKGDNEDQTVGIRVALRAMESPLRQIVDNAGEEPSVVANRVREGEGNFGYNAATEVYGDMLEMGILDPTKVTRLALQFAASVAGLMITTECMITDAPKKDAPAMPDMGGMGGMGGMM.

Residues 30–33 (TLGP), K51, 87–91 (DGTTT), G415, 479–481 (NAA), and D495 each bind ATP.

It belongs to the chaperonin (HSP60) family. As to quaternary structure, forms a cylinder of 14 subunits composed of two heptameric rings stacked back-to-back. Interacts with the co-chaperonin GroES.

The protein localises to the cytoplasm. It carries out the reaction ATP + H2O + a folded polypeptide = ADP + phosphate + an unfolded polypeptide.. Its function is as follows. Together with its co-chaperonin GroES, plays an essential role in assisting protein folding. The GroEL-GroES system forms a nano-cage that allows encapsulation of the non-native substrate proteins and provides a physical environment optimized to promote and accelerate protein folding. This is Chaperonin GroEL from Tolumonas auensis (strain DSM 9187 / NBRC 110442 / TA 4).